A 406-amino-acid polypeptide reads, in one-letter code: MRLFRWLLKQPVPKQIERYSRFSPSPLSIKQFLDFGRDNACEKTSYMFLRKELPVRLANTMREVNLLPDNLLNRPSVGLVQSWYMQSFLELLEYENKSPEDPQVLDNFLQVLIKVRNRHNDVVPTMAQGVIEYKEKFGFDPFISTNIQYFLDRFYTNRISFRMLINQHTLLFGGDTNPVHPKHIGSIDPTCNVADVVKDAYETAKMLCEQYYLVAPELEVEEFNAKAPDKPIQVVYVPSHLFHMLFELFKNSMRATVELYEDRKEGYPAVKTLVTLGKEDLSIKISDLGGGVPLRKIDRLFNYMYSTAPRPSLEPTRAAPLAGFGYGLPISRLYARYFQGDLKLYSMEGVGTDAVIYLKALSSESFERLPVFNKSAWRHYKTTPEADDWSNPSSEPRDASKYKAKQ.

Residues 131–362 form the Histidine kinase domain; sequence IEYKEKFGFD…DAVIYLKALS (232 aa). 247-254 contacts ATP; it reads ELFKNSMR. Lys278 carries the N6-succinyllysine modification. ATP is bound by residues Asp287, 306–307, and 323–328; these read ST and GFGYGL. The disordered stretch occupies residues 383–406; sequence TPEADDWSNPSSEPRDASKYKAKQ. The segment covering 395–406 has biased composition (basic and acidic residues); the sequence is EPRDASKYKAKQ.

The protein belongs to the PDK/BCKDK protein kinase family. In terms of assembly, homodimer. Interacts with the pyruvate dehydrogenase complex subunit DLAT, and is part of the multimeric pyruvate dehydrogenase complex that contains multiple copies of pyruvate dehydrogenase (E1), dihydrolipoamide acetyltransferase (DLAT, E2) and lipoamide dehydrogenase (DLD, E3). In terms of tissue distribution, expressed in heart, skeletal muscle, spinal cord, as well as fetal and adult brain.

The protein localises to the mitochondrion matrix. The catalysed reaction is L-seryl-[pyruvate dehydrogenase E1 alpha subunit] + ATP = O-phospho-L-seryl-[pyruvate dehydrogenase E1 alpha subunit] + ADP + H(+). With respect to regulation, activated by interaction with DLAT. Inhibited by AZD7545, dichloroacetate and radicicol. Its function is as follows. Inhibits pyruvate dehydrogenase activity by phosphorylation of the E1 subunit PDHA1, and thereby regulates glucose metabolism and aerobic respiration. Can also phosphorylate PDHA2. Decreases glucose utilization and increases fat metabolism in response to prolonged fasting, and as adaptation to a high-fat diet. Plays a role in glucose homeostasis and in maintaining normal blood glucose levels in function of nutrient levels and under starvation. Plays a role in the generation of reactive oxygen species. This chain is [Pyruvate dehydrogenase (acetyl-transferring)] kinase isozyme 3, mitochondrial (PDK3), found in Homo sapiens (Human).